Reading from the N-terminus, the 132-residue chain is MSMQDPIADMFTRIRNGLSAEKEFVSVPFSKIKMEIANFLVNEGYIKSCSKGTTSMGHPSIEVELKYHAGAPVIEMIKRVSRPSLRIYKSHADLPKVYGGYGVAIVSTSKGLVSDRKARDLGVGGEIIGYVA.

The protein belongs to the universal ribosomal protein uS8 family. In terms of assembly, part of the 30S ribosomal subunit. Contacts proteins S5 and S12.

Its function is as follows. One of the primary rRNA binding proteins, it binds directly to 16S rRNA central domain where it helps coordinate assembly of the platform of the 30S subunit. The polypeptide is Small ribosomal subunit protein uS8 (Francisella tularensis subsp. tularensis (strain FSC 198)).